Consider the following 523-residue polypeptide: Protein nucleotidyltransferase YdiU (523 aa).

ATP is bound by residues glycine 101, glycine 103, arginine 104, lysine 128, aspartate 140, glycine 141, arginine 198, and arginine 205. Aspartate 275 serves as the catalytic Proton acceptor. Mg(2+) contacts are provided by asparagine 276 and aspartate 285. Position 285 (aspartate 285) interacts with ATP.

It belongs to the SELO family. It depends on Mg(2+) as a cofactor. Requires Mn(2+) as cofactor.

The enzyme catalyses L-seryl-[protein] + ATP = 3-O-(5'-adenylyl)-L-seryl-[protein] + diphosphate. It carries out the reaction L-threonyl-[protein] + ATP = 3-O-(5'-adenylyl)-L-threonyl-[protein] + diphosphate. It catalyses the reaction L-tyrosyl-[protein] + ATP = O-(5'-adenylyl)-L-tyrosyl-[protein] + diphosphate. The catalysed reaction is L-histidyl-[protein] + UTP = N(tele)-(5'-uridylyl)-L-histidyl-[protein] + diphosphate. The enzyme catalyses L-seryl-[protein] + UTP = O-(5'-uridylyl)-L-seryl-[protein] + diphosphate. It carries out the reaction L-tyrosyl-[protein] + UTP = O-(5'-uridylyl)-L-tyrosyl-[protein] + diphosphate. Nucleotidyltransferase involved in the post-translational modification of proteins. It can catalyze the addition of adenosine monophosphate (AMP) or uridine monophosphate (UMP) to a protein, resulting in modifications known as AMPylation and UMPylation. The chain is Protein nucleotidyltransferase YdiU from Aromatoleum aromaticum (strain DSM 19018 / LMG 30748 / EbN1) (Azoarcus sp. (strain EbN1)).